The following is a 310-amino-acid chain: Homoserine kinase (310 aa).

Residue 91-101 (PIGSGLGSSAC) coordinates ATP.

This sequence belongs to the GHMP kinase family. Homoserine kinase subfamily.

It localises to the cytoplasm. It carries out the reaction L-homoserine + ATP = O-phospho-L-homoserine + ADP + H(+). The protein operates within amino-acid biosynthesis; L-threonine biosynthesis; L-threonine from L-aspartate: step 4/5. Its function is as follows. Catalyzes the ATP-dependent phosphorylation of L-homoserine to L-homoserine phosphate. In Sodalis glossinidius (strain morsitans), this protein is Homoserine kinase.